A 1441-amino-acid polypeptide reads, in one-letter code: Cleavage and polyadenylation specificity factor subunit 1 (1441 aa).

4 disordered regions span residues 404-435 (PASSVREAADKEEPPSKKKRVEPAVGWTGGKT), 545-569 (EEETPKAESTEQEPSAPKAEEDGRR), 713-775 (GGAR…PAPF), and 899-921 (FREKKPKPSKKKAEGCSTEEGSG). Residues 410–419 (EAADKEEPPS) show a composition bias toward basic and acidic residues. Ser754 and Ser764 each carry phosphoserine. The segment covering 756–773 (SKEEARRSSQPPADRDPA) has biased composition (basic and acidic residues).

This sequence belongs to the CPSF1 family. Component of the cleavage and polyadenylation specificity factor (CPSF) complex, composed of CPSF1, CPSF2, CPSF3, CPSF4 and FIP1L1. Found in a complex with CPSF1, FIP1L1 and PAPOLA. Interacts with FIP1L1 and SRRM1. Interacts with TUT1; the interaction is direct and mediates the recruitment of the CPSF complex on the 3'UTR of selected pre-mRNAs. Interacts with TENT2/GLD2.

Its subcellular location is the nucleus. It localises to the nucleoplasm. Component of the cleavage and polyadenylation specificity factor (CPSF) complex that plays a key role in pre-mRNA 3'-end formation, recognizing the AAUAAA signal sequence and interacting with poly(A) polymerase and other factors to bring about cleavage and poly(A) addition. This subunit is involved in the RNA recognition step of the polyadenylation reaction. May play a role in eye morphogenesis and the development of retinal ganglion cell projections to the midbrain. The sequence is that of Cleavage and polyadenylation specificity factor subunit 1 (Cpsf1) from Mus musculus (Mouse).